The chain runs to 78 residues: Translational regulator CsrA (78 aa).

Belongs to the CsrA/RsmA family. As to quaternary structure, homodimer; the beta-strands of each monomer intercalate to form a hydrophobic core, while the alpha-helices form wings that extend away from the core.

The protein resides in the cytoplasm. In terms of biological role, a translational regulator that binds mRNA to regulate translation initiation and/or mRNA stability. Usually binds in the 5'-UTR at or near the Shine-Dalgarno sequence preventing ribosome-binding, thus repressing translation. Its main target seems to be the major flagellin gene, while its function is anatagonized by FliW. The sequence is that of Translational regulator CsrA from Nitratidesulfovibrio vulgaris (strain ATCC 29579 / DSM 644 / CCUG 34227 / NCIMB 8303 / VKM B-1760 / Hildenborough) (Desulfovibrio vulgaris).